The following is an 871-amino-acid chain: Protein TIC 100 (871 aa).

Residues 1-85 are disordered; that stretch reads MANEELTESQ…NANPETNIRR (85 aa). The span at 8 to 20 shows a compositional bias: polar residues; that stretch reads ESQQQEDPSQQLP. The segment covering 30 to 46 has biased composition (low complexity); the sequence is SDSNSDSDASSQSSGDD. MORN repeat units lie at residues 219–239, 243–257, and 337–352; these read YEGTVWDDLAQGKGVYIAENG, YEGEWLQNDMEGHGV, and YAGQWKHSRMHGCGVY. Asn-238 bears the Deamidated asparagine mark. Residues 587–647 adopt a coiled-coil conformation; it reads MLDGLEKWTE…QEEEKKTEMG (61 aa). Disordered regions lie at residues 631–654 and 669–721; these read EELKKKEQEEEKKTEMGLTEEDED and KEKI…NSPF. Over residues 632 to 645 the composition is skewed to basic and acidic residues; that stretch reads ELKKKEQEEEKKTE. Thr-649 is modified (phosphothreonine). Positions 669–683 are enriched in basic and acidic residues; the sequence is KEKIQENKQEEKYKD. Residues 684–704 are compositionally biased toward acidic residues; it reads DDDEDDDDGDDDDDDDDDDDL.

Part of the Tic complex. Component of the 1-MD complex, composed of TIC20-I, TIC214, TIC100 and TIC56. Interacts with the translocating preproteins. Hydrolysis of ATP is essential for the formation of this complex. The 1-MD complex interacts with TIC21. As to expression, preferentially expressed in ovules, and moderately expressed in leaves and siliques.

It is found in the plastid. The protein resides in the chloroplast inner membrane. Functionally, involved in protein precursor import into chloroplasts. May be part of an intermediate translocation complex acting as a protein-conducting channel at the inner envelope. Plays an important role during embryogenesis and chloroplast biogenesis. In Arabidopsis thaliana (Mouse-ear cress), this protein is Protein TIC 100.